An 81-amino-acid chain; its full sequence is Small ribosomal subunit protein bS18 (81 aa).

Belongs to the bacterial ribosomal protein bS18 family. Part of the 30S ribosomal subunit. Forms a tight heterodimer with protein bS6.

Functionally, binds as a heterodimer with protein bS6 to the central domain of the 16S rRNA, where it helps stabilize the platform of the 30S subunit. The protein is Small ribosomal subunit protein bS18 of Leptospira borgpetersenii serovar Hardjo-bovis (strain JB197).